Consider the following 164-residue polypeptide: Large ribosomal subunit protein bL9 (164 aa).

This sequence belongs to the bacterial ribosomal protein bL9 family.

Binds to the 23S rRNA. The chain is Large ribosomal subunit protein bL9 from Borrelia duttonii (strain Ly).